The sequence spans 395 residues: Choline/ethanolamine kinase (395 aa).

An N-acetylalanine modification is found at Ala2. ATP contacts are provided by residues 75 to 81, Arg104, 146 to 152, Gln244, and Asp264; these read SGGLSNL and QYIPSRP. Position 77–79 (77–79) interacts with phosphocholine; the sequence is GLS.

It belongs to the choline/ethanolamine kinase family. In terms of assembly, homodimer, and heterodimer with CHKA.

It catalyses the reaction choline + ATP = phosphocholine + ADP + H(+). It carries out the reaction ethanolamine + ATP = phosphoethanolamine + ADP + H(+). Its pathway is phospholipid metabolism; phosphatidylethanolamine biosynthesis; phosphatidylethanolamine from ethanolamine: step 1/3. Functionally, has a key role in phospholipid metabolism, and catalyzes the first step of phosphatidylethanolamine and phosphatidylcholine biosynthesis. This Homo sapiens (Human) protein is Choline/ethanolamine kinase (CHKB).